The primary structure comprises 317 residues: MPFTIDTARSIFPETLAADVVPATIARFKQLSAEDQLALIWFAYLEMGKTITIAAPGAANMQFAENTLQEIRQMTPLQQTQAMCDLANRTDTPICRTYASWSPNIKLGFWYELGRFMDQGLVAPIPEGYKLSANANAILVTIQGIDPGQQITVLRNCVVDMGFDTSKLGSYQRVAEPVVPPQEMSQRTKVQIEGVTNSTVLQYMDNLNANDFDNLISLFAEDGALQPPFQKPIVGKENTLRFFREECQNLKLIPERGVSEPTEDGYTQIKVTGKVQTPWFGGNVGMNIAWRFLLNPENKVFFVAIDLLASPKELLNL.

The 152-residue stretch at 18–169 (ADVVPATIAR…DMGFDTSKLG (152 aa)) folds into the OCP N-terminal domain. Residues Leu37, Tyr203, and Trp290 each coordinate 3'-hydroxyechinenone.

This sequence belongs to the orange carotenoid-binding protein family. As to quaternary structure, homodimer. The cofactor is 3'-hydroxyechinenone. Post-translationally, proteolytically cleaved into a red 16.7 kDa form named red carotenoid-binding protein (RCP) which lacks 15 residues from the N-terminus and approximately 150 residues from the C-terminus.

The protein localises to the cellular thylakoid membrane. Functionally, acts as a blue-light photoreceptor and photo-protectant. Essential for inhibiting damaged induced by excess blue-green light via a process known as non-photochemical quenching (NPQ). Binding carotenoids improves OCP's intrinsic photoprotectant activity by broadening its absorption spectrum and facilitating the dissipation of absorbed energy. In the dark or dim light the stable inactive form (OCP-O) is orange, upon illumination with blue-green light it converts to a metastable active red form (OCP-R), inducing energy dissipation, quenching cellular fluorescence via NPQ. The chain is Orange carotenoid-binding protein from Limnospira maxima (Arthrospira maxima).